The primary structure comprises 254 residues: Nickel import ATP-binding protein NikO (254 aa).

Positions 5 to 246 (FELQGVQFAY…TALLRRARLL (242 aa)) constitute an ABC transporter domain. 37–44 (GANGSGKS) contributes to the ATP binding site.

It belongs to the ABC transporter superfamily. As to quaternary structure, forms an energy-coupling factor (ECF) transporter complex composed of an ATP-binding protein (A component, NikO), a transmembrane protein (T component, NikQ) and a fused possible substrate-capture protein (S component, NikMN) of unknown stoichimetry.

The protein resides in the cell inner membrane. The enzyme catalyses Ni(2+)(out) + ATP + H2O = Ni(2+)(in) + ADP + phosphate + H(+). Part of the energy-coupling factor (ECF) transporter complex NikMNQO involved in nickel import. The complex confers nickel uptake upon expression in E.coli. Shows very low activity with cobalt. Presumably responsible for energy coupling to the transport system. The polypeptide is Nickel import ATP-binding protein NikO (Rhodobacter capsulatus (strain ATCC BAA-309 / NBRC 16581 / SB1003)).